The primary structure comprises 30 residues: CQVVERGLDAKAKAAMLDAHNKARQKVANG.

Belongs to the CRISP family. Venom allergen 5-like subfamily. Contains 3 disulfide bonds. Expressed by the venom gland.

The protein localises to the secreted. The protein is Scolopendra 20528.11 Da toxin of Scolopendra angulata (Barbados giant red centipede).